The chain runs to 302 residues: N-acetylmuramic acid 6-phosphate etherase (302 aa).

One can recognise an SIS domain in the interval 57-220 (VSEKLKNNGR…TTAVMIKLGK (164 aa)). Glu85 acts as the Proton donor in catalysis. Glu116 is an active-site residue.

The protein belongs to the GCKR-like family. MurNAc-6-P etherase subfamily. As to quaternary structure, homodimer.

The enzyme catalyses N-acetyl-D-muramate 6-phosphate + H2O = N-acetyl-D-glucosamine 6-phosphate + (R)-lactate. Its pathway is amino-sugar metabolism; N-acetylmuramate degradation. Specifically catalyzes the cleavage of the D-lactyl ether substituent of MurNAc 6-phosphate, producing GlcNAc 6-phosphate and D-lactate. The chain is N-acetylmuramic acid 6-phosphate etherase from Clostridium acetobutylicum (strain ATCC 824 / DSM 792 / JCM 1419 / IAM 19013 / LMG 5710 / NBRC 13948 / NRRL B-527 / VKM B-1787 / 2291 / W).